Reading from the N-terminus, the 406-residue chain is 8-amino-7-oxononanoate synthase (406 aa).

A substrate-binding site is contributed by Arg-20. Residue 116–117 (GY) participates in pyridoxal 5'-phosphate binding. Position 141 (His-141) interacts with substrate. Pyridoxal 5'-phosphate is bound by residues Ser-187, His-215, and Thr-243. Lys-246 bears the N6-(pyridoxal phosphate)lysine mark. A substrate-binding site is contributed by Thr-366.

It belongs to the class-II pyridoxal-phosphate-dependent aminotransferase family. BioF subfamily. As to quaternary structure, homodimer. Pyridoxal 5'-phosphate serves as cofactor.

It carries out the reaction 6-carboxyhexanoyl-[ACP] + L-alanine + H(+) = (8S)-8-amino-7-oxononanoate + holo-[ACP] + CO2. It functions in the pathway cofactor biosynthesis; biotin biosynthesis. Functionally, catalyzes the decarboxylative condensation of pimeloyl-[acyl-carrier protein] and L-alanine to produce 8-amino-7-oxononanoate (AON), [acyl-carrier protein], and carbon dioxide. This chain is 8-amino-7-oxononanoate synthase, found in Cupriavidus metallidurans (strain ATCC 43123 / DSM 2839 / NBRC 102507 / CH34) (Ralstonia metallidurans).